The sequence spans 338 residues: 1-aminocyclopropane-1-carboxylate deaminase (338 aa).

At Lys-51 the chain carries N6-(pyridoxal phosphate)lysine. Residue Ser-78 is the Nucleophile of the active site.

The protein belongs to the ACC deaminase/D-cysteine desulfhydrase family. In terms of assembly, homotrimer. Pyridoxal 5'-phosphate is required as a cofactor.

It carries out the reaction 1-aminocyclopropane-1-carboxylate + H2O = 2-oxobutanoate + NH4(+). Functionally, catalyzes a cyclopropane ring-opening reaction, the irreversible conversion of 1-aminocyclopropane-1-carboxylate (ACC) to ammonia and alpha-ketobutyrate. Allows growth on ACC as a nitrogen source. In Paracidovorax citrulli (strain AAC00-1) (Acidovorax citrulli), this protein is 1-aminocyclopropane-1-carboxylate deaminase.